The following is a 556-amino-acid chain: Oxygen-dependent choline dehydrogenase (556 aa).

4–33 (DYIIIGAGSAGNVLATRLTEDPNTSVLLLE) provides a ligand contact to FAD. Histidine 473 acts as the Proton acceptor in catalysis.

It belongs to the GMC oxidoreductase family. The cofactor is FAD.

It carries out the reaction choline + A = betaine aldehyde + AH2. The catalysed reaction is betaine aldehyde + NAD(+) + H2O = glycine betaine + NADH + 2 H(+). Its pathway is amine and polyamine biosynthesis; betaine biosynthesis via choline pathway; betaine aldehyde from choline (cytochrome c reductase route): step 1/1. In terms of biological role, involved in the biosynthesis of the osmoprotectant glycine betaine. Catalyzes the oxidation of choline to betaine aldehyde and betaine aldehyde to glycine betaine at the same rate. The sequence is that of Oxygen-dependent choline dehydrogenase from Escherichia coli O139:H28 (strain E24377A / ETEC).